Reading from the N-terminus, the 129-residue chain is Phosphomevalonate dehydratase small subunit (129 aa).

The active-site Proton acceptor is Ser61.

This sequence belongs to the AcnX type II small subunit family. In terms of assembly, heterodimer composed of a large subunit (PMDh-L) and a small subunit (PMDh-S).

The catalysed reaction is (R)-5-phosphomevalonate = (2E)-3-methyl-5-phosphooxypent-2-enoate + H2O. It functions in the pathway isoprenoid biosynthesis; isopentenyl diphosphate biosynthesis via mevalonate pathway. Component of a hydro-lyase that catalyzes the dehydration of mevalonate 5-phosphate (MVA5P) to form trans-anhydromevalonate 5-phosphate (tAHMP). Involved in the archaeal mevalonate (MVA) pathway, which provides fundamental precursors for isoprenoid biosynthesis, such as isopentenyl diphosphate (IPP) and dimethylallyl diphosphate (DMAPP). The polypeptide is Phosphomevalonate dehydratase small subunit (Methanocaldococcus jannaschii (strain ATCC 43067 / DSM 2661 / JAL-1 / JCM 10045 / NBRC 100440) (Methanococcus jannaschii)).